We begin with the raw amino-acid sequence, 284 residues long: Acetylglutamate kinase (284 aa).

Residues 66 to 67 (GG), Arg88, and Asn179 each bind substrate.

The protein belongs to the acetylglutamate kinase family. ArgB subfamily.

It is found in the cytoplasm. The catalysed reaction is N-acetyl-L-glutamate + ATP = N-acetyl-L-glutamyl 5-phosphate + ADP. It functions in the pathway amino-acid biosynthesis; L-arginine biosynthesis; N(2)-acetyl-L-ornithine from L-glutamate: step 2/4. Its function is as follows. Catalyzes the ATP-dependent phosphorylation of N-acetyl-L-glutamate. The chain is Acetylglutamate kinase from Actinobacillus pleuropneumoniae serotype 3 (strain JL03).